The primary structure comprises 185 residues: Ribosome-recycling factor (185 aa).

It belongs to the RRF family.

The protein resides in the cytoplasm. Responsible for the release of ribosomes from messenger RNA at the termination of protein biosynthesis. May increase the efficiency of translation by recycling ribosomes from one round of translation to another. The protein is Ribosome-recycling factor of Vibrio campbellii (strain ATCC BAA-1116).